A 160-amino-acid polypeptide reads, in one-letter code: Envelope glycoprotein L (160 aa).

A signal peptide spans 1-22 (MASHKWLLQMIVFLKTITIAYC). The interval 24–149 (HLQDDTPLFF…TNIPENGCVW (126 aa)) is interaction with gH. Positions 28–160 (DTPLFFGAKP…ADRLFQRVCQ (133 aa)) constitute a gL alphaherpesvirus-type domain. 2 disulfide bridges follow: cysteine 49–cysteine 80 and cysteine 147–cysteine 159.

This sequence belongs to the herpesviridae glycoprotein L (gL) family. Alphaherpesvirinae gL subfamily. Interacts with glycoprotein H (gH); this interaction is necessary for the correct processing and cell surface expression of gH. The heterodimer gH/gL seems to interact with gB trimers during fusion.

The protein localises to the virion membrane. It localises to the host cell membrane. The protein resides in the host Golgi apparatus. It is found in the host trans-Golgi network. Its function is as follows. The heterodimer glycoprotein H-glycoprotein L is required for the fusion of viral and plasma membranes leading to virus entry into the host cell. Acts as a functional inhibitor of gH and maintains gH in an inhibited form. Upon binding to host integrins, gL dissociates from gH leading to activation of the viral fusion glycoproteins gB and gH. The sequence is that of Envelope glycoprotein L from Varicella-zoster virus (strain Oka vaccine) (HHV-3).